Here is a 119-residue protein sequence, read N- to C-terminus: MORF4 family associated protein 1 like 2 (119 aa).

The span at Met-1 to Pro-16 shows a compositional bias: basic and acidic residues. The segment at Met-1–Arg-36 is disordered.

This sequence belongs to the MORF4 family-associated protein family. May interact with CDK2AP1.

Its function is as follows. May play a role in cell proliferation. In Homo sapiens (Human), this protein is MORF4 family associated protein 1 like 2.